Consider the following 373-residue polypeptide: Anhydro-N-acetylmuramic acid kinase (373 aa).

Position 13–20 (13–20 (GTSMDGID)) interacts with ATP.

This sequence belongs to the anhydro-N-acetylmuramic acid kinase family.

It carries out the reaction 1,6-anhydro-N-acetyl-beta-muramate + ATP + H2O = N-acetyl-D-muramate 6-phosphate + ADP + H(+). It participates in amino-sugar metabolism; 1,6-anhydro-N-acetylmuramate degradation. It functions in the pathway cell wall biogenesis; peptidoglycan recycling. Catalyzes the specific phosphorylation of 1,6-anhydro-N-acetylmuramic acid (anhMurNAc) with the simultaneous cleavage of the 1,6-anhydro ring, generating MurNAc-6-P. Is required for the utilization of anhMurNAc either imported from the medium or derived from its own cell wall murein, and thus plays a role in cell wall recycling. In Brucella abortus (strain 2308), this protein is Anhydro-N-acetylmuramic acid kinase.